A 348-amino-acid polypeptide reads, in one-letter code: Dihydroorotase (348 aa).

Zn(2+)-binding residues include histidine 17 and histidine 19. Residues 19–21 and asparagine 45 contribute to the substrate site; that span reads HLR. Zn(2+) contacts are provided by lysine 103, histidine 140, and histidine 178. Lysine 103 is subject to N6-carboxylysine. A substrate-binding site is contributed by histidine 140. Leucine 223 contributes to the substrate binding site. Residue aspartate 251 coordinates Zn(2+). Aspartate 251 is an active-site residue. Residues histidine 255 and alanine 267 each coordinate substrate.

This sequence belongs to the metallo-dependent hydrolases superfamily. DHOase family. Class II DHOase subfamily. As to quaternary structure, homodimer. Zn(2+) serves as cofactor.

The enzyme catalyses (S)-dihydroorotate + H2O = N-carbamoyl-L-aspartate + H(+). It functions in the pathway pyrimidine metabolism; UMP biosynthesis via de novo pathway; (S)-dihydroorotate from bicarbonate: step 3/3. Its function is as follows. Catalyzes the reversible cyclization of carbamoyl aspartate to dihydroorotate. This Salmonella agona (strain SL483) protein is Dihydroorotase.